Here is a 147-residue protein sequence, read N- to C-terminus: Sec-independent protein translocase protein TatB (147 aa).

The chain crosses the membrane as a helical span at residues 1-21; sequence MFDISFSEILVIAAVALIVIG. The segment covering 67–88 has biased composition (basic and acidic residues); that stretch reads EETGRSIENSVHTELDKFRETV. A disordered region spans residues 67 to 147; it reads EETGRSIENS…GVNRERETAE (81 aa). A compositionally biased stretch (low complexity) spans 103–117; the sequence is APAGESSPPQNSSPA.

It belongs to the TatB family. The Tat system comprises two distinct complexes: a TatABC complex, containing multiple copies of TatA, TatB and TatC subunits, and a separate TatA complex, containing only TatA subunits. Substrates initially bind to the TatABC complex, which probably triggers association of the separate TatA complex to form the active translocon.

The protein localises to the cell inner membrane. Part of the twin-arginine translocation (Tat) system that transports large folded proteins containing a characteristic twin-arginine motif in their signal peptide across membranes. Together with TatC, TatB is part of a receptor directly interacting with Tat signal peptides. TatB may form an oligomeric binding site that transiently accommodates folded Tat precursor proteins before their translocation. This Nitrosospira multiformis (strain ATCC 25196 / NCIMB 11849 / C 71) protein is Sec-independent protein translocase protein TatB.